The chain runs to 352 residues: Probable dual-specificity RNA methyltransferase RlmN (352 aa).

The active-site Proton acceptor is the glutamate 93. The 235-residue stretch at 99–333 (FNYGYSVCVT…IRLERGSSID (235 aa)) folds into the Radical SAM core domain. Cysteine 106 and cysteine 336 form a disulfide bridge. Positions 113, 117, and 120 each coordinate [4Fe-4S] cluster. S-adenosyl-L-methionine is bound by residues 164–165 (GE), serine 196, and asparagine 295. The S-methylcysteine intermediate role is filled by cysteine 336.

The protein belongs to the radical SAM superfamily. RlmN family. Requires [4Fe-4S] cluster as cofactor.

It localises to the cytoplasm. The enzyme catalyses adenosine(2503) in 23S rRNA + 2 reduced [2Fe-2S]-[ferredoxin] + 2 S-adenosyl-L-methionine = 2-methyladenosine(2503) in 23S rRNA + 5'-deoxyadenosine + L-methionine + 2 oxidized [2Fe-2S]-[ferredoxin] + S-adenosyl-L-homocysteine. It catalyses the reaction adenosine(37) in tRNA + 2 reduced [2Fe-2S]-[ferredoxin] + 2 S-adenosyl-L-methionine = 2-methyladenosine(37) in tRNA + 5'-deoxyadenosine + L-methionine + 2 oxidized [2Fe-2S]-[ferredoxin] + S-adenosyl-L-homocysteine. Specifically methylates position 2 of adenine 2503 in 23S rRNA and position 2 of adenine 37 in tRNAs. This chain is Probable dual-specificity RNA methyltransferase RlmN, found in Malacoplasma penetrans (strain HF-2) (Mycoplasma penetrans).